The chain runs to 213 residues: MPILVIVRHGQSEWNLKNLFTGWSDVELTPTGEHEAEYAGIVLRPYHFDIAFTSVLKRAIHTLSIILNQTGATIPIIENEALNERNYGDLQGLNKAEVGEKYGAQQLIAWRRSYTEVPPGGESLENTCQRVIPYYQEKIEPELKDGRNVLIVAHGNSLRALMMHLEKISPEDIAHVDLATGAPRLYEFSSKLDLNSVSYIKLPETPLDVSTLL.

Residues 8–15 (RHGQSEWN), 21–22 (TG), arginine 58, 84–87 (ERNY), lysine 95, 111–112 (RR), and 155–156 (GN) each bind substrate. Catalysis depends on histidine 9, which acts as the Tele-phosphohistidine intermediate. Glutamate 84 serves as the catalytic Proton donor/acceptor.

This sequence belongs to the phosphoglycerate mutase family. BPG-dependent PGAM subfamily.

It catalyses the reaction (2R)-2-phosphoglycerate = (2R)-3-phosphoglycerate. It functions in the pathway carbohydrate degradation; glycolysis; pyruvate from D-glyceraldehyde 3-phosphate: step 3/5. Functionally, catalyzes the interconversion of 2-phosphoglycerate and 3-phosphoglycerate. The polypeptide is 2,3-bisphosphoglycerate-dependent phosphoglycerate mutase (Cytophaga hutchinsonii (strain ATCC 33406 / DSM 1761 / CIP 103989 / NBRC 15051 / NCIMB 9469 / D465)).